Consider the following 550-residue polypeptide: Parathyroid hormone 2 receptor (550 aa).

The signal sequence occupies residues 1-24; sequence MAGLGASLHVWGWLMLGSCLLARA. The Extracellular portion of the chain corresponds to 27–145; it reads DSDGTITIEE…GKQEFFERLY (119 aa). N-linked (GlcNAc...) asparagine glycans are attached at residues asparagine 51, asparagine 106, asparagine 116, and asparagine 121. The chain crosses the membrane as a helical span at residues 146–169; sequence VMYTVGYSISFGSLAVAILIIGYF. Over 170-176 the chain is Cytoplasmic; that stretch reads RRLHCTR. The chain crosses the membrane as a helical span at residues 177–196; sequence NYIHMHLFVSFMLRATSIFV. The Extracellular segment spans residues 197-237; it reads KDRVVHAHIGVKELESLIMQDDPQNSIEATSVDKSQYIGCK. The helical transmembrane segment at 238-260 threads the bilayer; sequence IAVVMFIYFLATNYYWILVEGLY. Residues 261-275 lie on the Cytoplasmic side of the membrane; it reads LHNLIFVAFFSDTKY. Residues 276–297 traverse the membrane as a helical segment; sequence LWGFILIGWGFPAAFVAAWAVA. The Extracellular segment spans residues 298-316; the sequence is RATLADARCWELSAGDIKW. A helical membrane pass occupies residues 317–337; the sequence is IYQAPILAAIGLNFILFLNTV. The Cytoplasmic portion of the chain corresponds to 338 to 364; the sequence is RVLATKIWETNAVGHDTRKQYRKLAKS. A helical membrane pass occupies residues 365–383; the sequence is TLVLVLVFGVHYIVFVCLP. The Extracellular portion of the chain corresponds to 384 to 394; sequence HSFTGLGWEIR. Residues 395–417 form a helical membrane-spanning segment; that stretch reads MHCELFFNSFQGFFVSIIYCYCN. The Cytoplasmic segment spans residues 418-550; sequence GEVQAEVKKM…GCQGETEDVL (133 aa). Positions 511 to 531 are enriched in basic and acidic residues; that stretch reads EETKEDSGRQGDDILMEKPSR. Residues 511 to 550 form a disordered region; it reads EETKEDSGRQGDDILMEKPSRPMESNPDTEGCQGETEDVL.

The protein belongs to the G-protein coupled receptor 2 family. As to quaternary structure, binds to TIPF39/TIP39. As to expression, expressed abundantly in brain and pancreas. Also expressed in the testis.

Its subcellular location is the cell membrane. This is a specific receptor for parathyroid hormone. The activity of this receptor is mediated by G proteins which activate adenylyl cyclase. PTH2R may be responsible for PTH effects in a number of physiological systems. It may play a significant role in pancreatic function. PTH2R presence in neurons indicates that it may function as a neurotransmitter receptor. This Homo sapiens (Human) protein is Parathyroid hormone 2 receptor (PTH2R).